Here is a 332-residue protein sequence, read N- to C-terminus: Formamidase (332 aa).

Positions 14 to 259 (FLTALIQYPV…WEIVTAEVYP (246 aa)) constitute a CN hydrolase domain. Catalysis depends on Glu-60, which acts as the Proton acceptor. Lys-132 (proton donor) is an active-site residue. The Nucleophile role is filled by Cys-165.

This sequence belongs to the carbon-nitrogen hydrolase superfamily. Aliphatic amidase family.

It carries out the reaction formamide + H2O = formate + NH4(+). Functionally, is an aliphatic amidase with a restricted substrate specificity, as it only hydrolyzes formamide. The polypeptide is Formamidase (Bacillus cereus (strain G9842)).